A 298-amino-acid chain; its full sequence is tRNA-cytidine(32) 2-sulfurtransferase (298 aa).

The tract at residues 1 to 26 is disordered; it reads MTAVISLPDPPQRASRGPRVAGPGQD. The short motif at 57 to 62 is the PP-loop motif element; the sequence is SGGKDS. Residues cysteine 132, cysteine 135, and cysteine 223 each contribute to the [4Fe-4S] cluster site.

Belongs to the TtcA family. In terms of assembly, homodimer. Mg(2+) is required as a cofactor. [4Fe-4S] cluster serves as cofactor.

It localises to the cytoplasm. The catalysed reaction is cytidine(32) in tRNA + S-sulfanyl-L-cysteinyl-[cysteine desulfurase] + AH2 + ATP = 2-thiocytidine(32) in tRNA + L-cysteinyl-[cysteine desulfurase] + A + AMP + diphosphate + H(+). Its pathway is tRNA modification. Catalyzes the ATP-dependent 2-thiolation of cytidine in position 32 of tRNA, to form 2-thiocytidine (s(2)C32). The sulfur atoms are provided by the cysteine/cysteine desulfurase (IscS) system. The sequence is that of tRNA-cytidine(32) 2-sulfurtransferase from Stenotrophomonas maltophilia (strain R551-3).